Here is a 364-residue protein sequence, read N- to C-terminus: DNA replication and repair protein RecF (364 aa).

An ATP-binding site is contributed by 30 to 37 (GDNGAGKT).

It belongs to the RecF family.

It is found in the cytoplasm. Its function is as follows. The RecF protein is involved in DNA metabolism; it is required for DNA replication and normal SOS inducibility. RecF binds preferentially to single-stranded, linear DNA. It also seems to bind ATP. In Stenotrophomonas maltophilia (strain K279a), this protein is DNA replication and repair protein RecF.